The chain runs to 199 residues: Probable thymidylate kinase (199 aa).

9–16 (GIDGCGKT) contributes to the ATP binding site.

This sequence belongs to the thymidylate kinase family.

The enzyme catalyses dTMP + ATP = dTDP + ADP. This chain is Probable thymidylate kinase, found in Methanococcus maripaludis (strain DSM 14266 / JCM 13030 / NBRC 101832 / S2 / LL).